The primary structure comprises 341 residues: Methionine import ATP-binding protein MetN 1 (341 aa).

The 240-residue stretch at 2–241 (IEFRQVSKSF…PKTTIAQNFV (240 aa)) folds into the ABC transporter domain. 38–45 (GYSGAGKS) is a binding site for ATP.

It belongs to the ABC transporter superfamily. Methionine importer (TC 3.A.1.24) family. In terms of assembly, the complex is composed of two ATP-binding proteins (MetN), two transmembrane proteins (MetI) and a solute-binding protein (MetQ).

The protein localises to the cell membrane. The enzyme catalyses L-methionine(out) + ATP + H2O = L-methionine(in) + ADP + phosphate + H(+). The catalysed reaction is D-methionine(out) + ATP + H2O = D-methionine(in) + ADP + phosphate + H(+). Part of the ABC transporter complex MetNIQ involved in methionine import. Responsible for energy coupling to the transport system. The polypeptide is Methionine import ATP-binding protein MetN 1 (Staphylococcus aureus (strain bovine RF122 / ET3-1)).